We begin with the raw amino-acid sequence, 341 residues long: Protein FAM50A (341 aa).

Disordered regions lie at residues 1–27 (MAQYKGAASEAGRAMQLMKKREREREQ) and 80–147 (LVKE…EIEE). The span at 80-115 (LVKEREKQLAKKEQSKELQLKLEKQKEKKRKEEQKR) shows a compositional bias: basic and acidic residues. Over residues 125–147 (DEGEDEEEEEEEEEEEEEDEIEE) the composition is skewed to acidic residues.

Belongs to the FAM50 family.

It localises to the nucleus. Functionally, probably involved in the regulation of pre-mRNA splicing. This Danio rerio (Zebrafish) protein is Protein FAM50A (fam50a).